The following is a 127-amino-acid chain: Small ribosomal subunit protein uS11 (127 aa).

This sequence belongs to the universal ribosomal protein uS11 family. As to quaternary structure, part of the 30S ribosomal subunit. Interacts with proteins S7 and S18. Binds to IF-3.

Functionally, located on the platform of the 30S subunit, it bridges several disparate RNA helices of the 16S rRNA. Forms part of the Shine-Dalgarno cleft in the 70S ribosome. The chain is Small ribosomal subunit protein uS11 from Anaeromyxobacter dehalogenans (strain 2CP-C).